A 101-amino-acid chain; its full sequence is Small ribosomal subunit protein uS14 (101 aa).

The disordered stretch occupies residues 36 to 72 (GTDESREAARAGIQRLPRDASPIRVRNRDGIDGRPRG). Positions 61–70 (RNRDGIDGRP) are enriched in basic and acidic residues.

Belongs to the universal ribosomal protein uS14 family. Part of the 30S ribosomal subunit. Contacts proteins S3 and S10.

Binds 16S rRNA, required for the assembly of 30S particles and may also be responsible for determining the conformation of the 16S rRNA at the A site. This Clavibacter michiganensis subsp. michiganensis (strain NCPPB 382) protein is Small ribosomal subunit protein uS14.